Reading from the N-terminus, the 2690-residue chain is Non-reducing polyketide synthase pigA (2690 aa).

Residues 96 to 211 (NILLSPLVVI…AELSRVLQDF (116 aa)) form the Starter acyltransferase (SAT) domain. Catalysis depends on Cys-140, which acts as the Nucleophile; for transacylase activity. His-258 acts as the Proton donor/acceptor; for transacylase activity in catalysis. The region spanning 388-804 (ENDIAVIGMS…GSNASLIVTQ (417 aa)) is the Ketosynthase family 3 (KS3) domain. Catalysis depends on for beta-ketoacyl synthase activity residues Cys-553, His-688, and His-727. In terms of domain architecture, Malonyl-CoA:ACP transacylase (MAT) spans 915–1182 (FGGQISTFVG…VQRLAKQHPS (268 aa)). Residues 1296–1426 (LTFVGYQDKD…GKVFFRSVDD (131 aa)) are N-terminal hotdog fold. The region spanning 1296–1602 (LTFVGYQDKD…YAKVPKMSMS (307 aa)) is the PKS/mFAS DH domain. The tract at residues 1323–1600 (LVSGHLIAQT…INYAKVPKMS (278 aa)) is product template (PT) domain. The active-site Proton acceptor; for dehydratase activity is the His-1327. The segment at 1454-1602 (ADDIIQGRNI…YAKVPKMSMS (149 aa)) is C-terminal hotdog fold. Catalysis depends on Asp-1510, which acts as the Proton donor; for dehydratase activity. The region spanning 1657–1731 (PDISGKVRAM…GLLRCIQEAL (75 aa)) is the Carrier 1 domain. Ser-1691 carries the O-(pantetheine 4'-phosphoryl)serine modification. Residues 1731 to 1764 (LGPSEGVEEETDNEEGEDGESSENPSVFTPSDAA) are disordered. Positions 1736 to 1751 (GVEEETDNEEGEDGES) are enriched in acidic residues. Residues 1755 to 1764 (PSVFTPSDAA) are compositionally biased toward polar residues. One can recognise a Carrier 2 domain in the interval 1768–1842 (SSAKADVAEF…EFDVKVNGKS (75 aa)). An O-(pantetheine 4'-phosphoryl)serine modification is found at Ser-1802. A methyltransferase domain region spans residues 1948–2255 (QTLERIKYLP…EVNIQRIFLA (308 aa)). The Thioester reductase (TE) domain occupies 2320-2564 (VTGATGSLGS…LSWTPVNDVA (245 aa)).

The cofactor is pantetheine 4'-phosphate.

Its pathway is secondary metabolite biosynthesis. Its function is as follows. Non-reducing polyketide synthase; part of the gene cluster that mediates the biosynthesis of azaphilone pigments (MonAzPs), a complex mixture of compounds with a common azaphilone skeleton very widely used as food colorants. PigA catalyzes the first step of MonAzPs biosynthesis and forms the hexaketide precursor from successive condensations of five malonyl-CoA units, with a simple acetyl-CoA starter unit. The starter acyl transferase (SAT) domain of pigA selects an acetyl-CoA starter unit, and the ketoacyl synthase (KS)-acyl transferase (AT)-acyl carrier protein (ACP) domains extend this starter unit five times with malonyl-CoA in five successive decarboxylative Claisen condensation cycles. The methyltransferase (MT) domain conducts a single C-methylation at C-4, most likely at the pentaketide stage. The reactive hexaketide chain then undergoes a product template (PT) domain-mediated C-2 to C-7 aldol cyclization to afford the first aromatic ring, followed by reductive release of the first pathway intermediate by the NADPH-dependent reductive release (R) domain. The role of esterase pigG is not clear, but it may play at most a supplementary role in the formation of the benzaldehyde produced by the pigA nrPKS. This very reactive benzaldehyde is intercepted by the pigC ketoreductase that to provide the first stable enzyme-free MonAzPs intermediate, 6-(4-hydroxy-2-oxopentyl)-3-methyl-2,4-dioxocyclohexane carbaldehyde, also known as M7PKS-1. The FAD-dependent monooxygenase pigN hydroxylates M7PKS-1 at C-4, which triggers the formation of the pyran ring. PigJ, pigK and pigD are involved in the acetylation of the pyran ring. PigJ and pigK form the two subunits of a dedicated fungal FAS that produces the side chain fatty acyl moiety of MonAzPs and pigD transfers the fatty acyl chain to the C-4 alcohol. PigM and pigO are involved in the elimination of the omega-1 alcohol. PigM acts as an O-acetyltransferase that synthesizes the putative O-11 acetyl intermediate whereas pigO eliminates acetic acid to yield an intermediate with a C10(11) double bond. The dehydration of the C-11 alcohol followed by the reduction of the C6(7) double bond by the NAD(P)H-dependent oxidoreductase pigE increases the electrophilicity of the C-5 ketone of the resulting acyl benzopyran. This in turn sets up the C-5 ketone for an intramolecular Knoevenagel aldol condensation with the C-20 enol of the side chain. This condensation affords the characteristic linear tricyclic carbon skeletons of the yellow pigments that serve as the common precursors for the classical yellow pigments monascin and ankaflavin, orange pigments rubopunctatin and monascorubrin, and red pigments ribropunctamine and monascorubramine. The FAD-dependent oxidoreductase pigF is especially invoved in the biosynthesis of orange and red pigments via desaturation of C6(7). This is Non-reducing polyketide synthase pigA from Monascus ruber (Mold).